We begin with the raw amino-acid sequence, 233 residues long: 28 kDa ribonucleoprotein, chloroplastic (233 aa).

The span at 1–16 shows a compositional bias: polar residues; sequence CVAQTSEWEQEGSTNA. Residues 1–52 form a disordered region; the sequence is CVAQTSEWEQEGSTNAVLEGESDPEGAVSWGSETQVSDEGGVEGGQGFSEPP. RRM domains are found at residues 55–133 and 149–227; these read AKLF…KAAP and CRVY…VAEE.

It localises to the plastid. It is found in the chloroplast. In terms of biological role, probably involved in the 3'-end processing of chloroplast mRNA's. This chain is 28 kDa ribonucleoprotein, chloroplastic, found in Spinacia oleracea (Spinach).